A 63-amino-acid chain; its full sequence is ATP synthase F(0) complex subunit 8 (63 aa).

Residues 8 to 24 traverse the membrane as a helical segment; that stretch reads TWFLTILSVMLTLFTLL. Lys-57 carries the N6-acetyllysine modification.

Belongs to the ATPase protein 8 family. In terms of assembly, component of the ATP synthase complex composed at least of ATP5F1A/subunit alpha, ATP5F1B/subunit beta, ATP5MC1/subunit c (homooctomer), MT-ATP6/subunit a, MT-ATP8/subunit 8, ATP5ME/subunit e, ATP5MF/subunit f, ATP5MG/subunit g, ATP5MK/subunit k, ATP5MJ/subunit j, ATP5F1C/subunit gamma, ATP5F1D/subunit delta, ATP5F1E/subunit epsilon, ATP5PF/subunit F6, ATP5PB/subunit b, ATP5PD/subunit d, ATP5PO/subunit OSCP. ATP synthase complex consists of a soluble F(1) head domain (subunits alpha(3) and beta(3)) - the catalytic core - and a membrane F(0) domain - the membrane proton channel (subunits c, a, 8, e, f, g, k and j). These two domains are linked by a central stalk (subunits gamma, delta, and epsilon) rotating inside the F1 region and a stationary peripheral stalk (subunits F6, b, d, and OSCP). Interacts with PRICKLE3.

The protein resides in the mitochondrion membrane. Functionally, subunit 8, of the mitochondrial membrane ATP synthase complex (F(1)F(0) ATP synthase or Complex V) that produces ATP from ADP in the presence of a proton gradient across the membrane which is generated by electron transport complexes of the respiratory chain. ATP synthase complex consist of a soluble F(1) head domain - the catalytic core - and a membrane F(1) domain - the membrane proton channel. These two domains are linked by a central stalk rotating inside the F(1) region and a stationary peripheral stalk. During catalysis, ATP synthesis in the catalytic domain of F(1) is coupled via a rotary mechanism of the central stalk subunits to proton translocation. In vivo, can only synthesize ATP although its ATP hydrolase activity can be activated artificially in vitro. Part of the complex F(0) domain. This Physeter macrocephalus (Sperm whale) protein is ATP synthase F(0) complex subunit 8.